A 492-amino-acid chain; its full sequence is MSMHTLLQYKWEMMTPEFIVLGTALILSLMDLFMPDDKDRRPLAWIAFVGVAIALIATIGLIPAKAVSILNDTFRLDAFGKAFKLLLLAGGALSLLLAFDYRPKEGLKDRGEFYYLLLCALLGAMIMASSGDLITLFVGLELLSISSYILAGIRKTSMQANESAMKYVINGGISTAITLFGMSYIFGLTGTTNIKEIALEVQKLTDSGYQYILAIAFLMMLVGLSFKISSVPFHMWTPDVYQGAPTPVTAFLSVVSKTAGFVIVLRLFITIFTQAPAQGKDPSSLLFSMQDYIAFLAGATMIIGNTIALKQRSMKRLFAYSSIAHAGYILVGFAAMSWVMIDSIWFYLLAYLFMNLGAFAILQRISDEADSDDLSHFAGLYQRNPLLAVAMGIFLLSLAGIPGTAGFIGKLNIFLGALMTEPGHYVLAAVMIATTVVSYVYYFGIFVQIFFRPADETTSLRMPIGLAMVVVLCALGTLLFGVVPGLAYHFLE.

The next 14 membrane-spanning stretches (helical) occupy residues 13-33 (MMTP…MDLF), 42-62 (PLAW…IGLI), 79-99 (FGKA…LLAF), 111-131 (GEFY…ASSG), 133-153 (LITL…LAGI), 168-188 (VING…IFGL), 211-231 (YILA…ISSV), 251-271 (FLSV…FITI), 284-304 (SLLF…MIIG), 318-340 (FAYS…SWVM), 344-366 (IWFY…QRIS), 388-408 (AVAM…AGFI), 426-446 (VLAA…FGIF), and 463-483 (PIGL…FGVV).

Belongs to the complex I subunit 2 family. In terms of assembly, NDH-1 is composed of 14 different subunits. Subunits NuoA, H, J, K, L, M, N constitute the membrane sector of the complex.

Its subcellular location is the cell membrane. The enzyme catalyses a quinone + NADH + 5 H(+)(in) = a quinol + NAD(+) + 4 H(+)(out). NDH-1 shuttles electrons from NADH, via FMN and iron-sulfur (Fe-S) centers, to quinones in the respiratory chain. The immediate electron acceptor for the enzyme in this species is believed to be a menaquinone. Couples the redox reaction to proton translocation (for every two electrons transferred, four hydrogen ions are translocated across the cytoplasmic membrane), and thus conserves the redox energy in a proton gradient. This is NADH-quinone oxidoreductase subunit N from Geobacillus sp. (strain WCH70).